A 219-amino-acid polypeptide reads, in one-letter code: Deoxyribose-phosphate aldolase (219 aa).

Aspartate 93 functions as the Proton donor/acceptor in the catalytic mechanism. The Schiff-base intermediate with acetaldehyde role is filled by lysine 154. Lysine 179 (proton donor/acceptor) is an active-site residue.

This sequence belongs to the DeoC/FbaB aldolase family. DeoC type 1 subfamily.

It is found in the cytoplasm. The enzyme catalyses 2-deoxy-D-ribose 5-phosphate = D-glyceraldehyde 3-phosphate + acetaldehyde. It participates in carbohydrate degradation; 2-deoxy-D-ribose 1-phosphate degradation; D-glyceraldehyde 3-phosphate and acetaldehyde from 2-deoxy-alpha-D-ribose 1-phosphate: step 2/2. Catalyzes a reversible aldol reaction between acetaldehyde and D-glyceraldehyde 3-phosphate to generate 2-deoxy-D-ribose 5-phosphate. This Haloquadratum walsbyi (strain DSM 16790 / HBSQ001) protein is Deoxyribose-phosphate aldolase.